We begin with the raw amino-acid sequence, 534 residues long: uncharacterized protein (534 aa).

The signal sequence occupies residues 1–22 (MGLRLLFSLICVFCISNIFTQA). Asn-31 carries N-linked (GlcNAc...) asparagine glycosylation. Disordered stretches follow at residues 70 to 145 (PTYY…SSVS) and 176 to 418 (SSLS…SSAP). The N-linked (GlcNAc...) asparagine glycan is linked to Asn-426.

The protein localises to the endoplasmic reticulum. It localises to the cell membrane. This is an uncharacterized protein from Schizosaccharomyces pombe (strain 972 / ATCC 24843) (Fission yeast).